The chain runs to 147 residues: Ribonuclease 4 (147 aa).

Positions 1–28 (MALQRTHSLLLLLLLTLLGLGLVQPSYG) are cleaved as a signal peptide. At Gln-29 the chain carries Pyrrolidone carboxylic acid. Residues Arg-35, His-40, Lys-68, Asn-71, and Thr-72 each coordinate dUMP. His-40 functions as the Proton acceptor in the catalytic mechanism. Cystine bridges form between Cys-53–Cys-109, Cys-67–Cys-120, Cys-85–Cys-135, and Cys-92–Cys-99. His-144 functions as the Proton donor in the catalytic mechanism. Phe-145 serves as a coordination point for dUMP.

It belongs to the pancreatic ribonuclease family.

It localises to the secreted. Functionally, cleaves preferentially after uridine bases. Has antimicrobial activity against uropathogenic E.coli (UPEC). Probably contributes to urinary tract sterility. This is Ribonuclease 4 (RNASE4) from Pan troglodytes (Chimpanzee).